The chain runs to 271 residues: Formamidopyrimidine-DNA glycosylase (271 aa).

Residue Pro2 is the Schiff-base intermediate with DNA of the active site. The Proton donor role is filled by Glu3. Lys58 acts as the Proton donor; for beta-elimination activity in catalysis. Residues His91, Arg110, and Arg152 each contribute to the DNA site. The FPG-type zinc finger occupies Trp237–Lys271. Catalysis depends on Arg261, which acts as the Proton donor; for delta-elimination activity.

Belongs to the FPG family. As to quaternary structure, monomer. The cofactor is Zn(2+).

The catalysed reaction is Hydrolysis of DNA containing ring-opened 7-methylguanine residues, releasing 2,6-diamino-4-hydroxy-5-(N-methyl)formamidopyrimidine.. It carries out the reaction 2'-deoxyribonucleotide-(2'-deoxyribose 5'-phosphate)-2'-deoxyribonucleotide-DNA = a 3'-end 2'-deoxyribonucleotide-(2,3-dehydro-2,3-deoxyribose 5'-phosphate)-DNA + a 5'-end 5'-phospho-2'-deoxyribonucleoside-DNA + H(+). Functionally, involved in base excision repair of DNA damaged by oxidation or by mutagenic agents. Acts as a DNA glycosylase that recognizes and removes damaged bases. Has a preference for oxidized purines, such as 7,8-dihydro-8-oxoguanine (8-oxoG). Has AP (apurinic/apyrimidinic) lyase activity and introduces nicks in the DNA strand. Cleaves the DNA backbone by beta-delta elimination to generate a single-strand break at the site of the removed base with both 3'- and 5'-phosphates. The protein is Formamidopyrimidine-DNA glycosylase of Nitrosomonas eutropha (strain DSM 101675 / C91 / Nm57).